The primary structure comprises 131 residues: Small ribosomal subunit protein bS6 (131 aa).

Residues 98–131 (EASPMVKAKDERRERREDFANETSEETEAGDSEE) are disordered. The segment covering 104-116 (KAKDERRERREDF) has biased composition (basic and acidic residues). Residues 120 to 131 (TSEETEAGDSEE) are compositionally biased toward acidic residues.

Belongs to the bacterial ribosomal protein bS6 family.

Its function is as follows. Binds together with bS18 to 16S ribosomal RNA. The polypeptide is Small ribosomal subunit protein bS6 (Edwardsiella ictaluri (strain 93-146)).